A 526-amino-acid polypeptide reads, in one-letter code: tRNA modification GTPase MSS1, mitochondrial (526 aa).

A mitochondrion-targeting transit peptide spans 1–19 (MNSASFLQSRLISRSFLVR). In terms of domain architecture, TrmE-type G spans 274–444 (GIKLVLLGAP…LISTLTSNFE (171 aa)). GTP contacts are provided by residues 281–288 (GAPNVGKS), 328–332 (DTAGI), and 394–397 (NKSD).

It belongs to the TRAFAC class TrmE-Era-EngA-EngB-Septin-like GTPase superfamily. TrmE GTPase family. As to quaternary structure, forms a heterodimer with MTO1.

Its subcellular location is the mitochondrion. Functionally, GTPase involved in the 5-carboxymethylaminomethyl modification (mnm(5)s(2)U34) of the wobble uridine base in mitochondrial tRNAs. Involved in the expression of cytochrome c oxidase subunit 1 (COX1). Works in association with the small subunit of mitoribosomes. The polypeptide is tRNA modification GTPase MSS1, mitochondrial (MSS1) (Saccharomyces cerevisiae (strain ATCC 204508 / S288c) (Baker's yeast)).